The chain runs to 210 residues: Chaperone protein TorD (210 aa).

It belongs to the TorD/DmsD family. TorD subfamily.

It is found in the cytoplasm. Involved in the biogenesis of TorA. Acts on TorA before the insertion of the molybdenum cofactor and, as a result, probably favors a conformation of the apoenzyme that is competent for acquiring the cofactor. The chain is Chaperone protein TorD from Salmonella choleraesuis (strain SC-B67).